We begin with the raw amino-acid sequence, 408 residues long: Multidrug resistance protein MdtG (408 aa).

The next 11 membrane-spanning stretches (helical) occupy residues 16-36 (LIVA…VMPF), 58-78 (IVFS…GGLA), 92-112 (LGMG…QFLI), 115-135 (ALLG…ATQV), 146-166 (TLST…GLLA), 173-193 (PVFF…LFCI), 224-244 (LFVT…ILTL), 256-276 (VAFI…LSAP), 290-310 (ILIT…YVQT), 319-339 (FLLG…LVYN), and 378-398 (AVFL…WNSL).

The protein belongs to the major facilitator superfamily. DHA1 family. MdtG (TC 2.A.1.2.20) subfamily.

It localises to the cell inner membrane. Confers resistance to fosfomycin and deoxycholate. This chain is Multidrug resistance protein MdtG, found in Escherichia coli O127:H6 (strain E2348/69 / EPEC).